We begin with the raw amino-acid sequence, 720 residues long: Polyribonucleotide nucleotidyltransferase (720 aa).

Mg(2+)-binding residues include Asp-484 and Asp-490. The 60-residue stretch at 551–610 (PRMYKISIDPSKIGSVIGSGGKTIRSIIEQTNTTVDIENDGTVVIGATDEASAQKAIKII) folds into the KH domain. Residues 620-688 (GSVYTGKVTR…SQGRINLSRR (69 aa)) form the S1 motif domain. Residues 697 to 720 (PISRNRDSQPRRSGPFRPQDRSNS) form a disordered region.

The protein belongs to the polyribonucleotide nucleotidyltransferase family. It depends on Mg(2+) as a cofactor.

Its subcellular location is the cytoplasm. The enzyme catalyses RNA(n+1) + phosphate = RNA(n) + a ribonucleoside 5'-diphosphate. Its function is as follows. Involved in mRNA degradation. Catalyzes the phosphorolysis of single-stranded polyribonucleotides processively in the 3'- to 5'-direction. The sequence is that of Polyribonucleotide nucleotidyltransferase from Dehalococcoides mccartyi (strain ATCC BAA-2266 / KCTC 15142 / 195) (Dehalococcoides ethenogenes (strain 195)).